A 273-amino-acid polypeptide reads, in one-letter code: DnaJ homolog subfamily C member 27 (273 aa).

Positions methionine 1–lysine 18 are required for interaction with MAPK1. GTP contacts are provided by residues glycine 23–serine 30, aspartate 71–histidine 75, and asparagine 134–aspartate 137. Positions aspartate 217–lysine 273 constitute a J domain.

This sequence belongs to the small GTPase superfamily. Rab family. Interacts directly with MAPK1 (wild-type and kinase-deficient forms). Interacts directly (in GTP-bound form) with MAP2K1 (wild-type and kinase-deficient forms).

The protein resides in the nucleus. GTPase which can activate the MEK/ERK pathway and induce cell transformation when overexpressed. May act as a nuclear scaffold for MAPK1, probably by association with MAPK1 nuclear export signal leading to enhanced ERK1/ERK2 signaling. In Mus musculus (Mouse), this protein is DnaJ homolog subfamily C member 27 (Dnajc27).